The primary structure comprises 45 residues: SEGSPENRICTNNCAGYKGCNYNCDTNIASYKSVCEGEFDPKCLR.

3 disulfide bridges follow: C10-C24, C14-C35, and C20-C43.

The protein belongs to the protease inhibitor I20 (potato type II proteinase inhibitor) family.

Its subcellular location is the secreted. Inhibits trypsin strongly and chymotrypsin temporarily. In Solanum tuberosum (Potato), this protein is Proteinase inhibitor IIA.